The chain runs to 345 residues: Tryptophan--tRNA ligase (345 aa).

Residues 21-23 (QPT) and 30-31 (GN) each bind ATP. The short motif at 22–31 (PTADSYHLGN) is the 'HIGH' region element. Aspartate 147 contributes to the L-tryptophan binding site. Residues 159–161 (GED), isoleucine 198, and 207–211 (KMSKS) contribute to the ATP site. The 'KMSKS' region motif lies at 207–211 (KMSKS).

It belongs to the class-I aminoacyl-tRNA synthetase family. In terms of assembly, homodimer.

The protein localises to the cytoplasm. It catalyses the reaction tRNA(Trp) + L-tryptophan + ATP = L-tryptophyl-tRNA(Trp) + AMP + diphosphate + H(+). Its function is as follows. Catalyzes the attachment of tryptophan to tRNA(Trp). The polypeptide is Tryptophan--tRNA ligase (Corynebacterium glutamicum (strain ATCC 13032 / DSM 20300 / JCM 1318 / BCRC 11384 / CCUG 27702 / LMG 3730 / NBRC 12168 / NCIMB 10025 / NRRL B-2784 / 534)).